We begin with the raw amino-acid sequence, 835 residues long: Protein translocase subunit SecA (835 aa).

ATP is bound by residues Gln-85, 103-107 (GEGKT), and Asp-492. The interval 788–807 (VQGEAVHPSSDGEEAKKKPV) is disordered. Zn(2+) is bound by residues Cys-819, Cys-821, Cys-830, and Cys-831.

The protein belongs to the SecA family. As to quaternary structure, monomer and homodimer. Part of the essential Sec protein translocation apparatus which comprises SecA, SecYEG and auxiliary proteins SecDF. Other proteins may also be involved. Requires Zn(2+) as cofactor.

It localises to the cell membrane. The protein localises to the cytoplasm. The enzyme catalyses ATP + H2O + cellular proteinSide 1 = ADP + phosphate + cellular proteinSide 2.. Its function is as follows. Part of the Sec protein translocase complex. Interacts with the SecYEG preprotein conducting channel. Has a central role in coupling the hydrolysis of ATP to the transfer of proteins into and across the cell membrane, serving as an ATP-driven molecular motor driving the stepwise translocation of polypeptide chains across the membrane. This is Protein translocase subunit SecA from Bacillus cereus (strain G9842).